An 81-amino-acid polypeptide reads, in one-letter code: Acyl carrier protein (81 aa).

The Carrier domain occupies 4–79 (QEIFEKVQTI…QAVDFISQKV (76 aa)). S39 is subject to O-(pantetheine 4'-phosphoryl)serine.

This sequence belongs to the acyl carrier protein (ACP) family. 4'-phosphopantetheine is transferred from CoA to a specific serine of apo-ACP by AcpS. This modification is essential for activity because fatty acids are bound in thioester linkage to the sulfhydryl of the prosthetic group.

The protein localises to the plastid. The protein resides in the chloroplast. It participates in lipid metabolism; fatty acid biosynthesis. Its function is as follows. Carrier of the growing fatty acid chain in fatty acid biosynthesis. The polypeptide is Acyl carrier protein (Guillardia theta (Cryptophyte)).